Here is a 526-residue protein sequence, read N- to C-terminus: Peptide chain release factor 3 (526 aa).

In terms of domain architecture, tr-type G spans 8-277; sequence NKRRTFAIIS…GLTEWAPKPQ (270 aa). GTP contacts are provided by residues 17–24, 85–89, and 139–142; these read SHPDAGKT, DTPGH, and NKLD.

It belongs to the TRAFAC class translation factor GTPase superfamily. Classic translation factor GTPase family. PrfC subfamily.

The protein resides in the cytoplasm. In terms of biological role, increases the formation of ribosomal termination complexes and stimulates activities of RF-1 and RF-2. It binds guanine nucleotides and has strong preference for UGA stop codons. It may interact directly with the ribosome. The stimulation of RF-1 and RF-2 is significantly reduced by GTP and GDP, but not by GMP. In Haemophilus ducreyi (strain 35000HP / ATCC 700724), this protein is Peptide chain release factor 3.